A 1010-amino-acid chain; its full sequence is Eukaryotic translation initiation factor 4E transporter (1010 aa).

The short motif at Y10–L16 is the YXXXXLphi motif element. Disordered stretches follow at residues G154–S182, P196–E277, Y289–G320, N354–S391, and Q921–S960. Polar residues predominate over residues C201 to S211. The span at D227 to T247 shows a compositional bias: basic and acidic residues. Positions S248–Q263 are enriched in polar residues. Composition is skewed to basic and acidic residues over residues N354 to N364 and K372 to S384. Positions S934–Y953 are enriched in polar residues.

This sequence belongs to the 4E-T/EIF4E-T family. In terms of assembly, interacts (via YXXXXLphi motif) with eIF4E1. Interacts with DDX6/me31B. Expressed in all larval and adult organs and tissues, with highest levels in the ovary.

The protein localises to the cytoplasm. Its subcellular location is the P-body. It localises to the nucleus. Its function is as follows. eIF4E1-binding protein that regulates translation and stability of mRNAs in processing bodies (P-bodies). Probably plays a role in P-bodies to coordinate the storage of translationally inactive mRNAs in the cytoplasm and prevent their degradation. Acts as a binding platform for multiple RNA-binding proteins. Required for the formation of P-bodies. This chain is Eukaryotic translation initiation factor 4E transporter, found in Drosophila melanogaster (Fruit fly).